Here is a 406-residue protein sequence, read N- to C-terminus: Bifunctional enzyme IspD/IspF (406 aa).

A 2-C-methyl-D-erythritol 4-phosphate cytidylyltransferase region spans residues 1-247 (MSLIRVNGEA…TPFFNPAKDT (247 aa)). The 2-C-methyl-D-erythritol 2,4-cyclodiphosphate synthase stretch occupies residues 248–406 (FIGMGFDTHA…HASMRYKQKL (159 aa)). Residues aspartate 254 and histidine 256 each coordinate a divalent metal cation. 4-CDP-2-C-methyl-D-erythritol 2-phosphate-binding positions include 254 to 256 (DTH) and 280 to 281 (HS). Position 288 (histidine 288) interacts with a divalent metal cation. Residues 302–304 (DIG), 307–311 (FPDND), 378–381 (TTME), and phenylalanine 385 each bind 4-CDP-2-C-methyl-D-erythritol 2-phosphate.

In the N-terminal section; belongs to the IspD/TarI cytidylyltransferase family. IspD subfamily. This sequence in the C-terminal section; belongs to the IspF family. It depends on a divalent metal cation as a cofactor.

The catalysed reaction is 2-C-methyl-D-erythritol 4-phosphate + CTP + H(+) = 4-CDP-2-C-methyl-D-erythritol + diphosphate. It catalyses the reaction 4-CDP-2-C-methyl-D-erythritol 2-phosphate = 2-C-methyl-D-erythritol 2,4-cyclic diphosphate + CMP. The protein operates within isoprenoid biosynthesis; isopentenyl diphosphate biosynthesis via DXP pathway; isopentenyl diphosphate from 1-deoxy-D-xylulose 5-phosphate: step 2/6. It participates in isoprenoid biosynthesis; isopentenyl diphosphate biosynthesis via DXP pathway; isopentenyl diphosphate from 1-deoxy-D-xylulose 5-phosphate: step 4/6. In terms of biological role, bifunctional enzyme that catalyzes the formation of 4-diphosphocytidyl-2-C-methyl-D-erythritol from CTP and 2-C-methyl-D-erythritol 4-phosphate (MEP) (IspD), and catalyzes the conversion of 4-diphosphocytidyl-2-C-methyl-D-erythritol 2-phosphate (CDP-ME2P) to 2-C-methyl-D-erythritol 2,4-cyclodiphosphate (ME-CPP) with a corresponding release of cytidine 5-monophosphate (CMP) (IspF). This Helicobacter acinonychis (strain Sheeba) protein is Bifunctional enzyme IspD/IspF.